A 514-amino-acid chain; its full sequence is ATP synthase subunit alpha (514 aa).

Residue 170–177 participates in ATP binding; that stretch reads GDRQIGKT.

Belongs to the ATPase alpha/beta chains family. In terms of assembly, F-type ATPases have 2 components, CF(1) - the catalytic core - and CF(0) - the membrane proton channel. CF(1) has five subunits: alpha(3), beta(3), gamma(1), delta(1), epsilon(1). CF(0) has three main subunits: a(1), b(2) and c(9-12). The alpha and beta chains form an alternating ring which encloses part of the gamma chain. CF(1) is attached to CF(0) by a central stalk formed by the gamma and epsilon chains, while a peripheral stalk is formed by the delta and b chains.

The protein localises to the cell inner membrane. The enzyme catalyses ATP + H2O + 4 H(+)(in) = ADP + phosphate + 5 H(+)(out). Produces ATP from ADP in the presence of a proton gradient across the membrane. The alpha chain is a regulatory subunit. The sequence is that of ATP synthase subunit alpha from Ectopseudomonas mendocina (strain ymp) (Pseudomonas mendocina).